Here is a 1690-residue protein sequence, read N- to C-terminus: DNA-directed RNA polymerase subunit beta' (1690 aa).

Zn(2+) contacts are provided by Cys63, Cys65, Cys78, and Cys81. Asp753, Asp755, and Asp757 together coordinate Mg(2+). Zn(2+) is bound by residues Cys1107, Cys1295, Cys1302, and Cys1305.

The protein belongs to the RNA polymerase beta' chain family. The RNAP catalytic core consists of 2 alpha, 1 beta, 1 beta' and 1 omega subunit. When a sigma factor is associated with the core the holoenzyme is formed, which can initiate transcription. It depends on Mg(2+) as a cofactor. Zn(2+) is required as a cofactor.

The enzyme catalyses RNA(n) + a ribonucleoside 5'-triphosphate = RNA(n+1) + diphosphate. In terms of biological role, DNA-dependent RNA polymerase catalyzes the transcription of DNA into RNA using the four ribonucleoside triphosphates as substrates. In Thermotoga petrophila (strain ATCC BAA-488 / DSM 13995 / JCM 10881 / RKU-1), this protein is DNA-directed RNA polymerase subunit beta'.